Reading from the N-terminus, the 54-residue chain is UPF0391 membrane protein Aave_3864 (54 aa).

2 helical membrane-spanning segments follow: residues 5–25 and 28–48; these read AVVF…GIAA and VGIA…TFVL.

It belongs to the UPF0391 family.

It localises to the cell membrane. The sequence is that of UPF0391 membrane protein Aave_3864 from Paracidovorax citrulli (strain AAC00-1) (Acidovorax citrulli).